The sequence spans 104 residues: Large ribosomal subunit protein uL24 (104 aa).

The protein belongs to the universal ribosomal protein uL24 family. In terms of assembly, part of the 50S ribosomal subunit.

Its function is as follows. One of two assembly initiator proteins, it binds directly to the 5'-end of the 23S rRNA, where it nucleates assembly of the 50S subunit. Functionally, one of the proteins that surrounds the polypeptide exit tunnel on the outside of the subunit. The protein is Large ribosomal subunit protein uL24 of Erwinia tasmaniensis (strain DSM 17950 / CFBP 7177 / CIP 109463 / NCPPB 4357 / Et1/99).